The sequence spans 522 residues: Lysine--tRNA ligase (522 aa).

The 'HIGH' region motif lies at 44–52; sequence PSGLPHIGT. Positions 290–294 match the 'KMSKS' region motif; the sequence is KISKS. An ATP-binding site is contributed by Lys-293.

This sequence belongs to the class-I aminoacyl-tRNA synthetase family.

The protein resides in the cytoplasm. It catalyses the reaction tRNA(Lys) + L-lysine + ATP = L-lysyl-tRNA(Lys) + AMP + diphosphate. This is Lysine--tRNA ligase from Rickettsia rickettsii (strain Iowa).